The following is a 294-amino-acid chain: MNSLEKKQITYGQRLKIAFQYAMPQIYLTQIAGWFANKRWGAVTHFVIKMFAKKYNVHMAEAAKPNFSDYATFNEFFIRQLKEYARPINQNTDALCLPADGKISQCGHIDDELLLQAKGHSFSLRDLLAGDEELTRLFKDGEFVTTYLSPRDYHRVHMPCNGTIRKMIYVPGELFSVNPFLNTHIPNLLARNERVICLFDTDFGPMVQILVGATITASISTVWEGVINPPRTGDIRTWTYEGQSAVSLAKGQEMGAFQLGSTVINLFPKNAVKLADYLQVDTVTRVGEILAYKK.

Active-site charge relay system; for autoendoproteolytic cleavage activity residues include D100, H157, and S261. Residue S261 is the Schiff-base intermediate with substrate; via pyruvic acid; for decarboxylase activity of the active site. Position 261 is a pyruvic acid (Ser); by autocatalysis (S261).

The protein belongs to the phosphatidylserine decarboxylase family. PSD-B subfamily. Prokaryotic type I sub-subfamily. In terms of assembly, heterodimer of a large membrane-associated beta subunit and a small pyruvoyl-containing alpha subunit. Pyruvate serves as cofactor. Post-translationally, is synthesized initially as an inactive proenzyme. Formation of the active enzyme involves a self-maturation process in which the active site pyruvoyl group is generated from an internal serine residue via an autocatalytic post-translational modification. Two non-identical subunits are generated from the proenzyme in this reaction, and the pyruvate is formed at the N-terminus of the alpha chain, which is derived from the carboxyl end of the proenzyme. The autoendoproteolytic cleavage occurs by a canonical serine protease mechanism, in which the side chain hydroxyl group of the serine supplies its oxygen atom to form the C-terminus of the beta chain, while the remainder of the serine residue undergoes an oxidative deamination to produce ammonia and the pyruvoyl prosthetic group on the alpha chain. During this reaction, the Ser that is part of the protease active site of the proenzyme becomes the pyruvoyl prosthetic group, which constitutes an essential element of the active site of the mature decarboxylase.

It is found in the cell membrane. It catalyses the reaction a 1,2-diacyl-sn-glycero-3-phospho-L-serine + H(+) = a 1,2-diacyl-sn-glycero-3-phosphoethanolamine + CO2. It functions in the pathway phospholipid metabolism; phosphatidylethanolamine biosynthesis; phosphatidylethanolamine from CDP-diacylglycerol: step 2/2. In terms of biological role, catalyzes the formation of phosphatidylethanolamine (PtdEtn) from phosphatidylserine (PtdSer). The chain is Phosphatidylserine decarboxylase proenzyme from Mannheimia succiniciproducens (strain KCTC 0769BP / MBEL55E).